Here is a 1300-residue protein sequence, read N- to C-terminus: DNA-directed RNA polymerase subunit beta (1300 aa).

The protein belongs to the RNA polymerase beta chain family. The RNAP catalytic core consists of 2 alpha, 1 beta, 1 beta' and 1 omega subunit. When a sigma factor is associated with the core the holoenzyme is formed, which can initiate transcription.

It catalyses the reaction RNA(n) + a ribonucleoside 5'-triphosphate = RNA(n+1) + diphosphate. In terms of biological role, DNA-dependent RNA polymerase catalyzes the transcription of DNA into RNA using the four ribonucleoside triphosphates as substrates. The sequence is that of DNA-directed RNA polymerase subunit beta from Chlorobium chlorochromatii (strain CaD3).